A 209-amino-acid polypeptide reads, in one-letter code: MDGVTVIEHPLVRHKLTIMRKKETSTAGFRRLLREISTLLCYEVTRDLEMTMETIDTPLETIQAPVLEGKKLVFASILRAGNGLLEGMLELVPSARVAHVGVYRDHDTLEAVEYYFKAPESLDARLVIVVDPMLATGNSSIAAVEKLKERGAKNIRFLCLLAAPEGIKNFREAHPDVPIYTAAIDRHLNEKGYIVPGLGDAGDRMYGTK.

5-phospho-alpha-D-ribose 1-diphosphate-binding positions include Arg79, Arg104, and 131-139 (DPMLATGNS). Residues Ile194 and 199–201 (GDA) each bind uracil. Residue Asp200 coordinates 5-phospho-alpha-D-ribose 1-diphosphate.

This sequence belongs to the UPRTase family. It depends on Mg(2+) as a cofactor.

The catalysed reaction is UMP + diphosphate = 5-phospho-alpha-D-ribose 1-diphosphate + uracil. It functions in the pathway pyrimidine metabolism; UMP biosynthesis via salvage pathway; UMP from uracil: step 1/1. Its activity is regulated as follows. Allosterically activated by GTP. Its function is as follows. Catalyzes the conversion of uracil and 5-phospho-alpha-D-ribose 1-diphosphate (PRPP) to UMP and diphosphate. In Agrobacterium fabrum (strain C58 / ATCC 33970) (Agrobacterium tumefaciens (strain C58)), this protein is Uracil phosphoribosyltransferase.